The sequence spans 147 residues: Large ribosomal subunit protein uL13 (147 aa).

The protein belongs to the universal ribosomal protein uL13 family. As to quaternary structure, part of the 50S ribosomal subunit.

Its function is as follows. This protein is one of the early assembly proteins of the 50S ribosomal subunit, although it is not seen to bind rRNA by itself. It is important during the early stages of 50S assembly. The sequence is that of Large ribosomal subunit protein uL13 from Rhodococcus opacus (strain B4).